A 647-amino-acid chain; its full sequence is Pre-mRNA-splicing factor SLU7 (647 aa).

Polar residues predominate over residues Met-1–Asn-19. A disordered region spans residues Met-1–Ala-44. Over residues Ala-21 to Ala-41 the composition is skewed to basic and acidic residues. A CCHC-type zinc finger spans residues Gly-113–Asp-130. Disordered stretches follow at residues His-193–Asp-212 and Glu-465–Glu-620. The span at Glu-465–Glu-479 shows a compositional bias: basic and acidic residues. Residues Val-480 to Glu-491 are compositionally biased toward acidic residues. A compositionally biased stretch (basic and acidic residues) spans Glu-513–Arg-533. Over residues Arg-534 to His-555 the composition is skewed to basic residues. Residues Glu-588–Asn-606 are compositionally biased toward basic and acidic residues.

The protein belongs to the SLU7 family.

The protein resides in the nucleus. Functionally, participates in the second catalytic step of pre-mRNA splicing, when the free hydroxyl group of exon I attacks the 3'-splice site to generate spliced mRNA and the excised lariat intron. This chain is Pre-mRNA-splicing factor SLU7, found in Caenorhabditis elegans.